We begin with the raw amino-acid sequence, 658 residues long: Deoxynucleoside triphosphate triphosphohydrolase SAMHD1 (658 aa).

Residues Ser-23–Asp-68 are disordered. At Ser-49 the chain carries Phosphoserine. Residue Thr-52 is modified to Phosphothreonine. The residue at position 55 (Ser-55) is a Phosphoserine. Thr-56 carries the post-translational modification Phosphothreonine. Phosphoserine is present on residues Ser-64 and Ser-125. Residues Trp-77–Ser-142 form the SAM domain. Residues Lys-148 and Val-149 each coordinate GTP. Position 151 (Asn-151) interacts with dGTP. Residues Asp-169, Gln-174, and Arg-177 each coordinate GTP. DGTP contacts are provided by Leu-182 and Val-188. The HD domain maps to Arg-196 to Phe-348. Mn(2+) contacts are provided by His-199, His-238, and Asp-239. Residues Asp-239, His-247, His-265, and Glu-266 each contribute to the dGTP site. His-265 is an active-site residue. Asp-343 contacts Mn(2+). DGTP is bound by residues Tyr-347, Asp-351, Arg-365, Arg-395, Lys-397, Asn-401, Tyr-417, His-419, and Lys-420. The GTP site is built by Arg-494 and Lys-498. Lys-509 participates in a covalent cross-link: Glycyl lysine isopeptide (Lys-Gly) (interchain with G-Cter in SUMO2). Lys-565 serves as a coordination point for GTP. Lys-565 is a binding site for dGTP. Position 634 is a phosphothreonine (Thr-634). Thr-634 carries the post-translational modification (Microbial infection) Phosphothreonine.

This sequence belongs to the SAMHD1 family. In terms of assembly, homodimer; in absence of GTP and dNTP. Homotetramer; in GTP- and dNTP-bound form. Interacts with MRE11; leading to stimulate the exonuclease activity of MRE11. Interacts with RBBP8/CtIP. Interacts with RBBP8/CtIP. Interacts (via its C-terminus) with CD81. Requires Zn(2+) as cofactor. In terms of processing, phosphorylation at Thr-634 by CDK1 acts as a switch to control deoxynucleoside triphosphate (dNTPase)-dependent and -independent functions. Phosphorylation at Thr-634 takes place in cycling cells: it reduces the stability of the homotetramer, impairing the dNTPase activity and subsequent ability to restrict infection by viruses. It also inhibits ability to suppress LINE-1 retrotransposon activity. In contrast, phosphorylation at Thr-634 promotes DNA end resection at stalled replication forks in response to DNA damage. (Microbial infection) Phosphorylation at Thr-634 by mouse cytomegalovirus kinase M97 leads to a reduced level of dNTP hydrolase activity and the loss of viral restriction. Post-translationally, not phosphorylated by CDK1 at the C-terminus.

The protein resides in the nucleus. It is found in the chromosome. The catalysed reaction is a 2'-deoxyribonucleoside 5'-triphosphate + H2O = a 2'-deoxyribonucleoside + triphosphate + H(+). It catalyses the reaction dATP + H2O = 2'-deoxyadenosine + triphosphate + H(+). It carries out the reaction dCTP + H2O = 2'-deoxycytidine + triphosphate + H(+). The enzyme catalyses dGTP + H2O = 2'-deoxyguanosine + triphosphate + H(+). The catalysed reaction is dTTP + H2O = thymidine + triphosphate + H(+). Allosterically activated and regulated via the combined actions of GTP and dNTPs (dATP, dGTP, dTTP and dCTP): Allosteric site 1 binds GTP, while allosteric site 2 binds dNTP. Allosteric activation promotes the formation of highly active homotetramers. Isoform 1: Phosphorylation at Thr-634 impairs homotetramerization, thereby inhibiting dNTPase activity, leading to reduced ability to restrict infection by viruses. Functionally, protein that acts both as a host restriction factor involved in defense response to virus and as a regulator of DNA end resection at stalled replication forks. Has deoxynucleoside triphosphate (dNTPase) activity, which is required to restrict infection by viruses: dNTPase activity reduces cellular dNTP levels to levels too low for retroviral reverse transcription to occur, blocking early-stage virus replication in dendritic and other myeloid cells. Likewise, suppresses LINE-1 retrotransposon activity. In addition to virus restriction, dNTPase activity acts as a regulator of DNA precursor pools by regulating dNTP pools. Phosphorylation at Thr-634 acts as a switch to control dNTPase-dependent and -independent functions: it inhibits dNTPase activity and ability to restrict infection by viruses, while it promotes DNA end resection at stalled replication forks. Functions during S phase at stalled DNA replication forks to promote the resection of gapped or reversed forks: acts by stimulating the exonuclease activity of MRE11, activating the ATR-CHK1 pathway and allowing the forks to restart replication. Its ability to promote degradation of nascent DNA at stalled replication forks is required to prevent induction of type I interferons, thereby preventing chronic inflammation. Ability to promote DNA end resection at stalled replication forks is independent of dNTPase activity. Enhances immunoglobulin hypermutation in B-lymphocytes by promoting transversion mutation. This is Deoxynucleoside triphosphate triphosphohydrolase SAMHD1 from Mus musculus (Mouse).